The sequence spans 255 residues: 5'-nucleotidase SurE (255 aa).

A divalent metal cation contacts are provided by Asp8, Asp9, Ser40, and Asn92.

The protein belongs to the SurE nucleotidase family. A divalent metal cation is required as a cofactor.

It localises to the cytoplasm. It catalyses the reaction a ribonucleoside 5'-phosphate + H2O = a ribonucleoside + phosphate. Nucleotidase that shows phosphatase activity on nucleoside 5'-monophosphates. This chain is 5'-nucleotidase SurE, found in Brucella suis (strain ATCC 23445 / NCTC 10510).